The sequence spans 186 residues: Ribosome-recycling factor (186 aa).

The interval 135 to 162 (DGMDGLKKAEKDGDIGQDESRAQSERVQ) is disordered.

The protein belongs to the RRF family.

The protein localises to the cytoplasm. Its function is as follows. Responsible for the release of ribosomes from messenger RNA at the termination of protein biosynthesis. May increase the efficiency of translation by recycling ribosomes from one round of translation to another. This is Ribosome-recycling factor from Sinorhizobium fredii (strain NBRC 101917 / NGR234).